Consider the following 372-residue polypeptide: PqqA peptide cyclase (372 aa).

The Radical SAM core domain maps to 4–220; it reads APPPLSVLLE…ETARRQLGDR (217 aa). 3 residues coordinate [4Fe-4S] cluster: C18, C22, and C25.

The protein belongs to the radical SAM superfamily. PqqE family. As to quaternary structure, interacts with PqqD. The interaction is necessary for activity of PqqE. [4Fe-4S] cluster serves as cofactor.

The catalysed reaction is [PQQ precursor protein] + S-adenosyl-L-methionine = E-Y cross-linked-[PQQ precursor protein] + 5'-deoxyadenosine + L-methionine + H(+). It functions in the pathway cofactor biosynthesis; pyrroloquinoline quinone biosynthesis. In terms of biological role, catalyzes the cross-linking of a glutamate residue and a tyrosine residue in the PqqA protein as part of the biosynthesis of pyrroloquinoline quinone (PQQ). The sequence is that of PqqA peptide cyclase from Xanthomonas axonopodis pv. citri (strain 306).